The primary structure comprises 411 residues: Corticotropin-releasing factor receptor 2 (411 aa).

Residues 1-19 (MDAALLLSLLEANCSLALA) constitute a signal peptide (not cleaved). Over 1–108 (MDAALLLSLL…EPILDDKQRK (108 aa)) the chain is Extracellular. Residues Asn13, Asn41, Asn74, Asn86, and Asn94 are each glycosylated (N-linked (GlcNAc...) asparagine). 3 disulfides stabilise this stretch: Cys14/Cys50, Cys40/Cys83, and Cys64/Cys98. Residues 109 to 139 (YDLHYRIALIINYLGHCVSVVALVAAFLLFL) traverse the membrane as a helical segment. Topologically, residues 140-146 (VLRSIRC) are cytoplasmic. Residues 147–171 (LRNVIHWNLITTFILRNITWFLLQL) traverse the membrane as a helical segment. Residues 172 to 185 (IDHEVHEGNEVWCR) are Extracellular-facing. An intrachain disulfide couples Cys184 to Cys254. The chain crosses the membrane as a helical span at residues 186–214 (CVTTIFNYFVVTNFFWMFVEGCYLHTAIV). The Cytoplasmic segment spans residues 215 to 221 (MTYSTEH). The helical transmembrane segment at 222–249 (LRKWLFLFIGWCIPCPIIVAWAVGKLYY) threads the bilayer. Residues 250–265 (ENEQCWFGKEPGDLVD) lie on the Extracellular side of the membrane. Residues 266-291 (YIYQGPIILVLLINFVFLFNIVRILM) form a helical membrane-spanning segment. The Cytoplasmic segment spans residues 292–302 (TKLRASTTSET). Residues 303–327 (IQYRKAVKATLVLLPLLGITYMLFF) form a helical membrane-spanning segment. Residues 328 to 334 (VNPGEDD) are Extracellular-facing. The chain crosses the membrane as a helical span at residues 335–364 (LSQIVFIYFNSFLQSFQGFFVSVFYCFFNG). At 365-411 (EVRSALRKRWHRWQDHHALRVPVARAMSIPTSPTRISFHSIKQTAAV) the chain is on the cytoplasmic side.

It belongs to the G-protein coupled receptor 2 family. In terms of assembly, monomer. Interacts (via N-terminal extracellular domain) with CRF, UCN, UCN2 and UCN3. An N-glycosylation site within the signal peptide impedes its proper cleavage and function. As to expression, predominantly expressed in limbic regions of the brain such as the lateral septum, the entorhinal cortex, the hypothalamic ventromedial nucleus and several amygdaloid nuclei. Also detectable in lung, kidney and heart.

It localises to the cell membrane. Its function is as follows. G-protein coupled receptor for CRH (corticotropin-releasing factor), UCN (urocortin), UCN2 and UCN3. Has high affinity for UCN. Ligand binding causes a conformation change that triggers signaling via guanine nucleotide-binding proteins (G proteins) and down-stream effectors, such as adenylate cyclase. Promotes the activation of adenylate cyclase, leading to increased intracellular cAMP levels. The sequence is that of Corticotropin-releasing factor receptor 2 (Crhr2) from Rattus norvegicus (Rat).